Reading from the N-terminus, the 456-residue chain is MLNSAMSVVILAAGKGTRMYSDIPKVLHTLAGKPMVQHVIDAATKLGAAQVHLVYGHGGELLKQTLKDDKLNWVLQAEQLGTGHAMQQAAPFFSDDEDILMLYGDVPLISVETLQRLRDAKPQGGIGLLTVKLDDPSGYGRITRENGKVTGIVEHKDATDEQRQIQEINTGILIANGADLKRWLSKLTNNNAQGEYYITDIIALAYQEGREIAAVHPARISETDGVNNRLQLSRLERIYQAEQAEKLLLSGVMLRDPARFDLRGTLYCGMDVEIDANVIIEGYVTLGHRVKIGAGCIIKNSVIGDDCEISPYSVVEDAHLEAACTIGPFARLRPGAELLAGAHVGNFVEMKKARLGKGSKAGHLTYLGDAEIGDNVNIGAGTITCNYDGANKFKTVIGDDVFVGSDTQLVAPVTVGKGATIAAGTTVTRNVADNELVLSRVPQVHKQGWQRPVKKK.

A pyrophosphorylase region spans residues 1-229 (MLNSAMSVVI…ISETDGVNNR (229 aa)). UDP-N-acetyl-alpha-D-glucosamine is bound by residues 11–14 (LAAG), Lys-25, Gln-76, 81–82 (GT), 103–105 (YGD), Gly-140, Glu-154, Asn-169, and Asn-227. Asp-105 contacts Mg(2+). Asn-227 lines the Mg(2+) pocket. Residues 230-250 (LQLSRLERIYQAEQAEKLLLS) form a linker region. The interval 251–456 (GVMLRDPARF…QGWQRPVKKK (206 aa)) is N-acetyltransferase. 2 residues coordinate UDP-N-acetyl-alpha-D-glucosamine: Arg-333 and Lys-351. Catalysis depends on His-363, which acts as the Proton acceptor. UDP-N-acetyl-alpha-D-glucosamine-binding residues include Tyr-366 and Asn-377. Acetyl-CoA contacts are provided by residues Ala-380, 386–387 (NY), Ser-405, Ala-423, and Arg-440.

This sequence in the N-terminal section; belongs to the N-acetylglucosamine-1-phosphate uridyltransferase family. The protein in the C-terminal section; belongs to the transferase hexapeptide repeat family. Homotrimer. It depends on Mg(2+) as a cofactor.

It localises to the cytoplasm. The catalysed reaction is alpha-D-glucosamine 1-phosphate + acetyl-CoA = N-acetyl-alpha-D-glucosamine 1-phosphate + CoA + H(+). It catalyses the reaction N-acetyl-alpha-D-glucosamine 1-phosphate + UTP + H(+) = UDP-N-acetyl-alpha-D-glucosamine + diphosphate. The protein operates within nucleotide-sugar biosynthesis; UDP-N-acetyl-alpha-D-glucosamine biosynthesis; N-acetyl-alpha-D-glucosamine 1-phosphate from alpha-D-glucosamine 6-phosphate (route II): step 2/2. It participates in nucleotide-sugar biosynthesis; UDP-N-acetyl-alpha-D-glucosamine biosynthesis; UDP-N-acetyl-alpha-D-glucosamine from N-acetyl-alpha-D-glucosamine 1-phosphate: step 1/1. Its pathway is bacterial outer membrane biogenesis; LPS lipid A biosynthesis. Its function is as follows. Catalyzes the last two sequential reactions in the de novo biosynthetic pathway for UDP-N-acetylglucosamine (UDP-GlcNAc). The C-terminal domain catalyzes the transfer of acetyl group from acetyl coenzyme A to glucosamine-1-phosphate (GlcN-1-P) to produce N-acetylglucosamine-1-phosphate (GlcNAc-1-P), which is converted into UDP-GlcNAc by the transfer of uridine 5-monophosphate (from uridine 5-triphosphate), a reaction catalyzed by the N-terminal domain. The sequence is that of Bifunctional protein GlmU from Salmonella typhi.